The sequence spans 398 residues: 4-hydroxy-3-methylbut-2-enyl diphosphate reductase (398 aa).

Cys-66 lines the [4Fe-4S] cluster pocket. A (2E)-4-hydroxy-3-methylbut-2-enyl diphosphate-binding site is contributed by His-96. His-96 is a dimethylallyl diphosphate binding site. His-96 contacts isopentenyl diphosphate. Residue Cys-157 participates in [4Fe-4S] cluster binding. His-185 contacts (2E)-4-hydroxy-3-methylbut-2-enyl diphosphate. Residue His-185 participates in dimethylallyl diphosphate binding. His-185 is a binding site for isopentenyl diphosphate. The active-site Proton donor is the Glu-187. Thr-250 contacts (2E)-4-hydroxy-3-methylbut-2-enyl diphosphate. Cys-288 contributes to the [4Fe-4S] cluster binding site. Residues Ser-317, Ser-318, Asn-319, and Ser-379 each contribute to the (2E)-4-hydroxy-3-methylbut-2-enyl diphosphate site. 4 residues coordinate dimethylallyl diphosphate: Ser-317, Ser-318, Asn-319, and Ser-379. The isopentenyl diphosphate site is built by Ser-317, Ser-318, Asn-319, and Ser-379.

This sequence belongs to the IspH family. It depends on [4Fe-4S] cluster as a cofactor.

It catalyses the reaction isopentenyl diphosphate + 2 oxidized [2Fe-2S]-[ferredoxin] + H2O = (2E)-4-hydroxy-3-methylbut-2-enyl diphosphate + 2 reduced [2Fe-2S]-[ferredoxin] + 2 H(+). It carries out the reaction dimethylallyl diphosphate + 2 oxidized [2Fe-2S]-[ferredoxin] + H2O = (2E)-4-hydroxy-3-methylbut-2-enyl diphosphate + 2 reduced [2Fe-2S]-[ferredoxin] + 2 H(+). The protein operates within isoprenoid biosynthesis; dimethylallyl diphosphate biosynthesis; dimethylallyl diphosphate from (2E)-4-hydroxy-3-methylbutenyl diphosphate: step 1/1. It functions in the pathway isoprenoid biosynthesis; isopentenyl diphosphate biosynthesis via DXP pathway; isopentenyl diphosphate from 1-deoxy-D-xylulose 5-phosphate: step 6/6. Its function is as follows. Catalyzes the conversion of 1-hydroxy-2-methyl-2-(E)-butenyl 4-diphosphate (HMBPP) into a mixture of isopentenyl diphosphate (IPP) and dimethylallyl diphosphate (DMAPP). Acts in the terminal step of the DOXP/MEP pathway for isoprenoid precursor biosynthesis. This is 4-hydroxy-3-methylbut-2-enyl diphosphate reductase from Synechococcus sp. (strain ATCC 27144 / PCC 6301 / SAUG 1402/1) (Anacystis nidulans).